The following is a 54-amino-acid chain: Large ribosomal subunit protein bL32 (54 aa).

Residues M1 to E24 form a disordered region. Positions K7–R16 are enriched in basic residues.

Belongs to the bacterial ribosomal protein bL32 family.

The polypeptide is Large ribosomal subunit protein bL32 (Buchnera aphidicola subsp. Schizaphis graminum (strain Sg)).